We begin with the raw amino-acid sequence, 117 residues long: NADH-ubiquinone oxidoreductase chain 3 (117 aa).

The next 3 membrane-spanning stretches (helical) occupy residues 2-22 (ILYV…IYLL), 56-76 (FFIL…LFPV), and 85-105 (SPLI…GLLY).

Belongs to the complex I subunit 3 family.

Its subcellular location is the mitochondrion membrane. It catalyses the reaction a ubiquinone + NADH + 5 H(+)(in) = a ubiquinol + NAD(+) + 4 H(+)(out). Core subunit of the mitochondrial membrane respiratory chain NADH dehydrogenase (Complex I) that is believed to belong to the minimal assembly required for catalysis. Complex I functions in the transfer of electrons from NADH to the respiratory chain. The immediate electron acceptor for the enzyme is believed to be ubiquinone. The protein is NADH-ubiquinone oxidoreductase chain 3 (ND3) of Albinaria caerulea (Land snail).